The chain runs to 103 residues: Conantokin-Br (103 aa).

An N-terminal signal peptide occupies residues methionine 1–glycine 21. A propeptide spanning residues threonine 22 to arginine 79 is cleaved from the precursor. Residues arginine 34–leucine 64 are disordered. Residues serine 55 to leucine 64 show a composition bias toward basic and acidic residues. 4-carboxyglutamate is present on residues glutamate 82, glutamate 83, glutamate 89, and glutamate 93. A divalent metal cation is bound by residues glutamate 89 and glutamate 93.

Belongs to the conotoxin B superfamily. It depends on Ca(2+) as a cofactor. Requires Mg(2+) as cofactor. As to expression, expressed by the venom duct.

Its subcellular location is the secreted. In terms of biological role, conantokins inhibit N-methyl-D-aspartate (NMDA) receptors. This toxin inhibits NR2 subunits N-methyl-D-aspartate (NMDA) receptor-mediated calcium influx in central nervous system neurons in the following order of preference: NR2B/GRIN2B (IC(50)=0.14 uM), NR2D/GRIN2D (IC(50)=0.31 uM), NR2A/GRIN2A (IC(50)=0.68 uM) and NR2C/GRIN2A (IC(50)=4.9 uM), when tested on rat receptors. The sequence is that of Conantokin-Br from Conus sulcatus (Sulcate cone).